The chain runs to 312 residues: Methionyl-tRNA formyltransferase (312 aa).

Position 109-112 (109-112 (SLLP)) interacts with (6S)-5,6,7,8-tetrahydrofolate.

Belongs to the Fmt family.

It catalyses the reaction L-methionyl-tRNA(fMet) + (6R)-10-formyltetrahydrofolate = N-formyl-L-methionyl-tRNA(fMet) + (6S)-5,6,7,8-tetrahydrofolate + H(+). Functionally, attaches a formyl group to the free amino group of methionyl-tRNA(fMet). The formyl group appears to play a dual role in the initiator identity of N-formylmethionyl-tRNA by promoting its recognition by IF2 and preventing the misappropriation of this tRNA by the elongation apparatus. This Anaeromyxobacter dehalogenans (strain 2CP-1 / ATCC BAA-258) protein is Methionyl-tRNA formyltransferase.